Here is a 5206-residue protein sequence, read N- to C-terminus: Multifunctional-autoprocessing repeats-in-toxin (5206 aa).

The first 19 residues, 1-19, serve as a signal peptide directing secretion; that stretch reads MGKPFWRSVEYFFTGNYSA. RtxA repeat units follow at residues 101-118, 121-138, 141-157, 161-184, 187-204, 207-224, 255-272, 275-291, 584-601, 604-620, 624-641, 644-658, 741-753, 759-771, 782-798, 801-816, 820-835, 841-855, 858-875, 877-891, 896-910, 915-932, 934-950, 972-984, 991-1006, 1031-1043, 1067-1079, 1087-1102, 1110-1122, 1125-1142, 1145-1159, 1163-1179, 1184-1199, 1201-1217, 1220-1236, 1242-1256, 1258-1275, 1296-1313, and 1315-1332; these read GAAG…GDVS, GAAA…GNVT, GAGG…QGNL, GAGA…GDVT, GAGA…GNIT, GAGA…GDIT, GVGG…GDIH, GGGA…GSSF, GAGG…GNVY, GGGI…FGNT, GGGA…GDLT, GAGL…SKQG, AGGA…VGDG, MLGG…HISG, ALGG…GNTL, MGGG…DGTT, MVGG…NGDT, GVGN…GQTL, MGAA…TSIA, MIGA…GEGN, MGGL…GNGD, MVAE…MSVA, MLAK…GTTL, MIGQ…KVGN, MVGK…DGTS, GKAN…GDGL, AAAK…HVGD, AGKG…GTTV, GNVM…GTTI, AKGK…LGVN, WGQA…DGDR, AKGE…GKEV, GKAN…DDYT, AWGK…GRNV, AKGE…GDSF, KGNI…MQVT, AKGK…LSVT, AWGK…LNVA, and MKGK…LNIN. Polar residues predominate over residues 1606 to 1626; that stretch reads SQQANAVSEHATQNQASQNAL. Disordered regions lie at residues 1606–1682 and 1738–1895; these read SQQA…ESEA and IAAA…EQEA. Over residues 1627–1646 the composition is skewed to basic and acidic residues; that stretch reads SDKERAEADRQRLEQEKQKQ. Residues 1652–1671 show a composition bias toward polar residues; the sequence is GSQSQLESTDQQALGNNGQA. Residues 1778–1805 show a composition bias toward basic and acidic residues; sequence AEAKADAETRKADAVAKSNDAKQAESDA. Over residues 1825–1834 the composition is skewed to polar residues; sequence NKANQAQNDA. Positions 1835 to 1849 are enriched in basic and acidic residues; sequence KGTKQNEGDRPDREG. The segment covering 1870 to 1880 has biased composition (polar residues); that stretch reads SHITTDSQTNA. A membrane localization region (MLD) region spans residues 2377-2461; the sequence is ELMSVTELLD…SLLNQVNSRL (85 aa). The rho inactivation domain (RID) stretch occupies residues 2537–2901; that stretch reads EYGQVVADTI…HQVTDVLDAL (365 aa). The ABH effector region stretch occupies residues 2998–3113; sequence VVLFLHGSGS…MPSMTKAITA (116 aa). The Peptidase C80 domain occupies 4111–4295; that stretch reads PTADGGESRF…AENNKVSLSW (185 aa). Residues 4117–4119, 4144–4145, and Arg-4175 contribute to the 1D-myo-inositol hexakisphosphate site; these read ESR and KH. His-4181 (for cysteine protease activity) is an active-site residue. A 1D-myo-inositol hexakisphosphate-binding site is contributed by Ser-4226. The Nucleophile; for cysteine protease activity role is filled by Cys-4230. 1D-myo-inositol hexakisphosphate-binding positions include 4259–4261, 4272–4273, Lys-4285, and Lys-4290; these read SVR and RK. Disordered regions lie at residues 4333–4362 and 4738–4779; these read GAIG…ANNK and LKEK…ETPD. The span at 4750–4762 shows a compositional bias: low complexity; it reads SSVSVNGASVNSA.

Mg(2+) is required as a cofactor.

The protein resides in the secreted. It is found in the host cytoplasm. The protein localises to the host cytosol. It localises to the host cell membrane. It carries out the reaction L-lysyl-/S-(2E,6E,10E)-geranylgeranyl-L-cysteinyl-[protein] + hexadecanoyl-CoA = N(6)-hexadecanoyl-L-lysyl-/S-(2E,6E,10E)-geranylgeranyl-L-cysteinyl-[protein] + CoA + H(+). The enzyme catalyses L-lysyl-/S-(2E,6E,10E)-geranylgeranyl-L-cysteinyl-[protein] + dodecanoyl-CoA = N(6)-dodecanoyl-L-lysyl-/S-(2E,6E,10E)-geranylgeranyl-L-cysteinyl-[protein] + CoA + H(+). The catalysed reaction is L-lysyl-/S-(2E,6E,10E)-geranylgeranyl-L-cysteinyl-[protein] + decanoyl-CoA = N(6)-decanoyl-L-lysyl-/S-(2E,6E,10E)-geranylgeranyl-L-cysteinyl-[protein] + CoA + H(+). Functionally, precursor of a multifunctional toxin that causes destruction of the actin cytoskeleton by covalent cross-linking of actin and inactivation of Rho GTPases when translocated into the host cytoplasm. Upon translocation into the host cell, undergoes autoprocessing in cis mediated by the peptidase C80 domain (also named CPD domain): the protease activity is activated upon binding inositol hexakisphosphate (InsP6) present at the host cell membrane and delivers the Cysteine protease domain-containing toxin F3 chain to the host cytosol. The Cysteine protease domain-containing toxin F3 chain will then further cleave and release effector toxin chains that cause disassembly of the actin cytoskeleton and enhance V.vulnificus colonization of the small intestine, possibly by facilitating evasion of phagocytic cells. Its function is as follows. Following autocatalytic cleavage in cis, this chain mediates processing in trans to release other individual toxin chains to the host cytosol. Released effector toxin chains cause disassembly of the actin cytoskeleton and enhance V.vulnificus colonization of the small intestine, possibly by facilitating evasion of phagocytic cells. In terms of biological role, actin-directed toxin that catalyzes the covalent cross-linking of host cytoplasmic monomeric actin. Mediates the cross-link between 'Lys-50' of one monomer and 'Glu-270' of another actin monomer, resulting in formation of highly toxic actin oligomers that cause cell rounding. The toxin can be highly efficient at very low concentrations by acting on formin homology family proteins: toxic actin oligomers bind with high affinity to formins and adversely affect both nucleation and elongation abilities of formins, causing their potent inhibition in both profilin-dependent and independent manners. Acts as an acid--amino-acid ligase that transfers the gamma-phosphoryl group of ATP to the 'Glu-270' actin residue, resulting in the formation of an activated acyl phosphate intermediate. This intermediate is further hydrolyzed and the energy of hydrolysis is utilized for the formation of the amide bond between actin subunits. N-epsilon-fatty acyltransferase that mediates lysine-palmitoylation of host Rho GTPase proteins, with a strong preference for host Rac1. After delivery to the host cytosol, localizes to the host cell membrane where it palmitoylates host Rho GTPase proteins, resulting in loss of all active GTP-bound Rho and subsequent actin depolymerization. Prenylation of host Rac1 at the C-terminus is required for lysine-palmitoylation. Functionally, indirectly activates the small GTPase CDC42. This Vibrio vulnificus protein is Multifunctional-autoprocessing repeats-in-toxin.